Reading from the N-terminus, the 123-residue chain is Small ribosomal subunit protein uS12 (123 aa).

Aspartate 89 carries the post-translational modification 3-methylthioaspartic acid.

The protein belongs to the universal ribosomal protein uS12 family. In terms of assembly, part of the 30S ribosomal subunit. Contacts proteins S8 and S17. May interact with IF1 in the 30S initiation complex.

In terms of biological role, with S4 and S5 plays an important role in translational accuracy. Its function is as follows. Interacts with and stabilizes bases of the 16S rRNA that are involved in tRNA selection in the A site and with the mRNA backbone. Located at the interface of the 30S and 50S subunits, it traverses the body of the 30S subunit contacting proteins on the other side and probably holding the rRNA structure together. The combined cluster of proteins S8, S12 and S17 appears to hold together the shoulder and platform of the 30S subunit. The sequence is that of Small ribosomal subunit protein uS12 from Syntrophotalea carbinolica (strain DSM 2380 / NBRC 103641 / GraBd1) (Pelobacter carbinolicus).